Here is a 139-residue protein sequence, read N- to C-terminus: Natriuretic peptide Mc-NP (139 aa).

The signal sequence occupies residues 1-25 (MVGLSRLRGGGLLLVLALLPLALDG). The propeptide occupies 26-75 (KPLEEAPTAPSRIIPFSRPVRKQSQAVLDPMVHPERPAGSGDDGDSRRLE). The tract at residues 45-72 (VRKQSQAVLDPMVHPERPAGSGDDGDSR) is disordered. C86 and C102 are joined by a disulfide. The propeptide occupies 117-139 (IIPFSRPVRKESRAALDRMQQPG).

It belongs to the natriuretic peptide family. In terms of tissue distribution, expressed by the venom gland.

Its subcellular location is the secreted. Snake venom natriuretic peptide that dose-dependently induces the rapid relaxation of rat aortic strips phenylephrine-precontracted. Acts by stimulating cGMP production in a dose-dependent manner (by probably activating NPR1 and/or NPR2). May also show potent hypotensive effects. A synthetic peptide (AA 77-108, where the Cys-95 is replaced by a Ser) increases sodium excretion and urinary volume in rat kidneys. The protein is Natriuretic peptide Mc-NP of Micrurus corallinus (Brazilian coral snake).